The chain runs to 214 residues: C-type lectin domain family 2 member L (214 aa).

A disordered region spans residues 1–56; that stretch reads MEPAREPPSRARPPPPLAARPAPAPAAPRPRSPAEAEARGPEGLLRRSGSGYEGST. The segment covering 10-31 has biased composition (pro residues); it reads RARPPPPLAARPAPAPAAPRPR. The residue at position 32 (S32) is a Phosphoserine. The helical transmembrane segment at 69 to 89 threads the bilayer; it reads LLLGAIAVLLFAILVVMSILA. The region spanning 107–209 is the C-type lectin domain; it reads YGRKCYFFSE…CLMTRPWVCS (103 aa). Cystine bridges form between C128-C208 and C187-C200.

It is found in the membrane. This Homo sapiens (Human) protein is C-type lectin domain family 2 member L (CLEC2L).